A 547-amino-acid polypeptide reads, in one-letter code: Dihydroxy-acid dehydratase (547 aa).

Residue Asp-78 coordinates Mg(2+). Cys-119 is a [2Fe-2S] cluster binding site. Mg(2+)-binding residues include Asp-120 and Lys-121. An N6-carboxylysine modification is found at Lys-121. Cys-191 serves as a coordination point for [2Fe-2S] cluster. Glu-439 provides a ligand contact to Mg(2+). Ser-464 acts as the Proton acceptor in catalysis.

The protein belongs to the IlvD/Edd family. In terms of assembly, homodimer. The cofactor is [2Fe-2S] cluster. Mg(2+) serves as cofactor.

It carries out the reaction (2R)-2,3-dihydroxy-3-methylbutanoate = 3-methyl-2-oxobutanoate + H2O. It catalyses the reaction (2R,3R)-2,3-dihydroxy-3-methylpentanoate = (S)-3-methyl-2-oxopentanoate + H2O. It functions in the pathway amino-acid biosynthesis; L-isoleucine biosynthesis; L-isoleucine from 2-oxobutanoate: step 3/4. Its pathway is amino-acid biosynthesis; L-valine biosynthesis; L-valine from pyruvate: step 3/4. Functionally, functions in the biosynthesis of branched-chain amino acids. Catalyzes the dehydration of (2R,3R)-2,3-dihydroxy-3-methylpentanoate (2,3-dihydroxy-3-methylvalerate) into 2-oxo-3-methylpentanoate (2-oxo-3-methylvalerate) and of (2R)-2,3-dihydroxy-3-methylbutanoate (2,3-dihydroxyisovalerate) into 2-oxo-3-methylbutanoate (2-oxoisovalerate), the penultimate precursor to L-isoleucine and L-valine, respectively. The chain is Dihydroxy-acid dehydratase from Methanospirillum hungatei JF-1 (strain ATCC 27890 / DSM 864 / NBRC 100397 / JF-1).